The following is a 239-amino-acid chain: Fatty acid metabolism regulator protein (239 aa).

An HTH gntR-type domain is found at 6-74 (QSPAGFAEEY…HGKPTKVNNF (69 aa)). A DNA-binding region (H-T-H motif) is located at residues 34–53 (ERELSELIGVTRTTLREVLQ).

Homodimer.

It is found in the cytoplasm. Multifunctional regulator of fatty acid metabolism. The protein is Fatty acid metabolism regulator protein of Yersinia pseudotuberculosis serotype O:1b (strain IP 31758).